A 292-amino-acid polypeptide reads, in one-letter code: MSAGDGLPPLREVVARHGLEPKKALGQNFLYDLNLTGRIARAAGPLAGVTVVEVGPGPGGLTRALLAEGAARVVAIERDPRALPALAEIAAHYPGRLEVVDADALAFDPRPLVGDAPARIVANLPYNVGTALLTGWLDGEAWPPWWDQAVLMFQREVAERIVAGPEERADYGRLGVLCGWRTEAEILFDVSPSAFVPPPKVTSSVVRLVPRAQPLPCRAGALEAVTRAAFGQRRKMLRQSLKALTPAAGDLLAAAGLSETARAEEIPVAGFVDLANRWDAHRKAGAPVGTPA.

N28, L30, G55, E77, D103, and N123 together coordinate S-adenosyl-L-methionine.

This sequence belongs to the class I-like SAM-binding methyltransferase superfamily. rRNA adenine N(6)-methyltransferase family. RsmA subfamily.

Its subcellular location is the cytoplasm. It carries out the reaction adenosine(1518)/adenosine(1519) in 16S rRNA + 4 S-adenosyl-L-methionine = N(6)-dimethyladenosine(1518)/N(6)-dimethyladenosine(1519) in 16S rRNA + 4 S-adenosyl-L-homocysteine + 4 H(+). Specifically dimethylates two adjacent adenosines (A1518 and A1519) in the loop of a conserved hairpin near the 3'-end of 16S rRNA in the 30S particle. May play a critical role in biogenesis of 30S subunits. This is Ribosomal RNA small subunit methyltransferase A from Methylobacterium radiotolerans (strain ATCC 27329 / DSM 1819 / JCM 2831 / NBRC 15690 / NCIMB 10815 / 0-1).